A 172-amino-acid polypeptide reads, in one-letter code: Shikimate kinase (172 aa).

Residue 14-19 coordinates ATP; that stretch reads GAGKST. Mg(2+) is bound at residue S18. Residues D36, R60, and G82 each coordinate substrate. Residue R120 participates in ATP binding. Position 139 (R139) interacts with substrate. Q156 is a binding site for ATP.

It belongs to the shikimate kinase family. In terms of assembly, monomer. Mg(2+) is required as a cofactor.

It localises to the cytoplasm. It carries out the reaction shikimate + ATP = 3-phosphoshikimate + ADP + H(+). It participates in metabolic intermediate biosynthesis; chorismate biosynthesis; chorismate from D-erythrose 4-phosphate and phosphoenolpyruvate: step 5/7. In terms of biological role, catalyzes the specific phosphorylation of the 3-hydroxyl group of shikimic acid using ATP as a cosubstrate. The chain is Shikimate kinase from Aliivibrio salmonicida (strain LFI1238) (Vibrio salmonicida (strain LFI1238)).